Reading from the N-terminus, the 126-residue chain is S-adenosylmethionine decarboxylase proenzyme (126 aa).

Residue Ser-63 is the Schiff-base intermediate with substrate; via pyruvic acid of the active site. Ser-63 carries the pyruvic acid (Ser); by autocatalysis modification. The active-site Proton acceptor; for processing activity is the His-68. The active-site Proton donor; for catalytic activity is the Cys-83.

This sequence belongs to the prokaryotic AdoMetDC family. Type 1 subfamily. Heterotetramer of two alpha and two beta chains arranged as a dimer of alpha/beta heterodimers. Requires pyruvate as cofactor. Post-translationally, is synthesized initially as an inactive proenzyme. Formation of the active enzyme involves a self-maturation process in which the active site pyruvoyl group is generated from an internal serine residue via an autocatalytic post-translational modification. Two non-identical subunits are generated from the proenzyme in this reaction, and the pyruvate is formed at the N-terminus of the alpha chain, which is derived from the carboxyl end of the proenzyme. The post-translation cleavage follows an unusual pathway, termed non-hydrolytic serinolysis, in which the side chain hydroxyl group of the serine supplies its oxygen atom to form the C-terminus of the beta chain, while the remainder of the serine residue undergoes an oxidative deamination to produce ammonia and the pyruvoyl group blocking the N-terminus of the alpha chain.

The catalysed reaction is S-adenosyl-L-methionine + H(+) = S-adenosyl 3-(methylsulfanyl)propylamine + CO2. The protein operates within amine and polyamine biosynthesis; S-adenosylmethioninamine biosynthesis; S-adenosylmethioninamine from S-adenosyl-L-methionine: step 1/1. Catalyzes the decarboxylation of S-adenosylmethionine to S-adenosylmethioninamine (dcAdoMet), the propylamine donor required for the synthesis of the polyamines spermine and spermidine from the diamine putrescine. The polypeptide is S-adenosylmethionine decarboxylase proenzyme (Clostridium kluyveri (strain NBRC 12016)).